The following is a 270-amino-acid chain: Phosphoribosylformylglycinamidine synthase subunit PurQ (270 aa).

The Glutamine amidotransferase type-1 domain occupies 5 to 251 (ALVLHATGTN…VIRERDSEEE (247 aa)). C95 (nucleophile) is an active-site residue. Residues H236 and E238 contribute to the active site.

In terms of assembly, part of the FGAM synthase complex composed of 1 PurL, 1 PurQ and 2 PurS subunits.

The protein localises to the cytoplasm. It catalyses the reaction N(2)-formyl-N(1)-(5-phospho-beta-D-ribosyl)glycinamide + L-glutamine + ATP + H2O = 2-formamido-N(1)-(5-O-phospho-beta-D-ribosyl)acetamidine + L-glutamate + ADP + phosphate + H(+). The enzyme catalyses L-glutamine + H2O = L-glutamate + NH4(+). It functions in the pathway purine metabolism; IMP biosynthesis via de novo pathway; 5-amino-1-(5-phospho-D-ribosyl)imidazole from N(2)-formyl-N(1)-(5-phospho-D-ribosyl)glycinamide: step 1/2. Its function is as follows. Part of the phosphoribosylformylglycinamidine synthase complex involved in the purines biosynthetic pathway. Catalyzes the ATP-dependent conversion of formylglycinamide ribonucleotide (FGAR) and glutamine to yield formylglycinamidine ribonucleotide (FGAM) and glutamate. The FGAM synthase complex is composed of three subunits. PurQ produces an ammonia molecule by converting glutamine to glutamate. PurL transfers the ammonia molecule to FGAR to form FGAM in an ATP-dependent manner. PurS interacts with PurQ and PurL and is thought to assist in the transfer of the ammonia molecule from PurQ to PurL. This is Phosphoribosylformylglycinamidine synthase subunit PurQ from Treponema denticola (strain ATCC 35405 / DSM 14222 / CIP 103919 / JCM 8153 / KCTC 15104).